A 1037-amino-acid chain; its full sequence is Signal-induced proliferation-associated protein 1 (1037 aa).

A disordered region spans residues 1–85; it reads MWAGGVGSPR…ASRPAATPTR (85 aa). Thr62 carries the post-translational modification Phosphothreonine. Phosphoserine is present on residues Ser65, Ser178, Ser299, and Ser309. A Rap-GAP domain is found at 316 to 534; that stretch reads LLTLDEQVLS…RTRQQYLQDL (219 aa). The PDZ domain occupies 682 to 758; sequence ELALPRDGQG…VCVTVLPPDE (77 aa). Phosphoserine is present on residues Ser812 and Ser834. Disordered stretches follow at residues 830-849 and 855-898; these read HNSL…LPNT and LVTT…ASIL. Low complexity predominate over residues 871 to 881; it reads PPSQDQSGSPS. Ser907 carries the phosphoserine modification. Residues 943 to 969 form a disordered region; sequence REGQPISESGDPKEALKCDSEPEPGSL. Residues 952–962 show a composition bias toward basic and acidic residues; that stretch reads GDPKEALKCDS. Residues 968–1025 adopt a coiled-coil conformation; the sequence is SLSEKVSHLESMLWKLQEDLQREKADRAALEEEVRSLRHNNQRLLAESESAATRLLLA.

In terms of assembly, interacts with RRP1B; the interaction leads to inhibition of SIPA1 GTPase activity. Preferentially expressed in both fetal and adult lymphohematopoietic tissues.

It is found in the nucleus. Its subcellular location is the cytoplasm. The protein resides in the perinuclear region. The protein localises to the endomembrane system. In terms of biological role, GTPase activator for the nuclear Ras-related regulatory proteins Rap1, Rsr1 and Ran in vitro, converting them to the putatively inactive GDP-bound state. Affects cell cycle progression. The chain is Signal-induced proliferation-associated protein 1 (Sipa1) from Mus musculus (Mouse).